Here is a 275-residue protein sequence, read N- to C-terminus: Ribosomal RNA small subunit methyltransferase A (275 aa).

Asn19, Leu21, Gly46, Glu71, Asp94, and Asn117 together coordinate S-adenosyl-L-methionine.

The protein belongs to the class I-like SAM-binding methyltransferase superfamily. rRNA adenine N(6)-methyltransferase family. RsmA subfamily.

The protein resides in the cytoplasm. The enzyme catalyses adenosine(1518)/adenosine(1519) in 16S rRNA + 4 S-adenosyl-L-methionine = N(6)-dimethyladenosine(1518)/N(6)-dimethyladenosine(1519) in 16S rRNA + 4 S-adenosyl-L-homocysteine + 4 H(+). Functionally, specifically dimethylates two adjacent adenosines (A1518 and A1519) in the loop of a conserved hairpin near the 3'-end of 16S rRNA in the 30S particle. May play a critical role in biogenesis of 30S subunits. This chain is Ribosomal RNA small subunit methyltransferase A, found in Burkholderia lata (strain ATCC 17760 / DSM 23089 / LMG 22485 / NCIMB 9086 / R18194 / 383).